We begin with the raw amino-acid sequence, 1072 residues long: MLGDGKEGTSTIPGFNQIQFEGFYRFIDQGLIEELSKFPKIEDIDHEIEFQLFVETYQLVEPLIKERDAVYESLTYSSELYVSAGLIWKTSRNMQEQRIFIGNIPLMNSLGISIVNGIYRIVINQILQSPGIYYQSELDHNGISVYTGTIISDWGGRLELEIDKKARIWARVSRKQKISILVLSSAMGSNLREILENVCYPEIFLSFLTDKEKKKIGSKENAILEFYQQFSCVGGDPIFSESLCKELQKKFFHQRCELGRIGRRNINWRLNLNIPQNNIFLLPRDILAAADHLIGMKFGMGTLDDMNHLKNKRIRSVADLLQDQLGLALARLENVVKGTIGGAIRHKLIPTPQNLVTSTPLTTTYESFFGLHPLSQVLDRTNPLTQIVHGRKLSYLGPGGLTGRTANFRIRDIHPSHYGRICPIDTSEGINVGLIGSLSIHARIGDWGSLESPFYELFEKSKEARIRMLFLSPSQDEYYMIAAGNSLALNRDIQEEQAVPARYRQEFLTIAWEEVNLRSIFPFQYFSIGASLIPFIEHNDANRALMSSNMQRQAVPLSRSEKCIVGTGLERQVALDSGVPAIAEHEGKILSTDTEKIILSGDGNTISIPLIMYQRSNKNTCMHQKPQVRRGKCIKKGQILADGAATVGGELALGKNILVAYMPWEGYNFEDAVLISECLVYGDIYTSFHIRKYEIQTHVTTQGPERITKEIPHLEGRLLRNLDKNGIVMLGSWVETGDILVGKLTPQVAKESSYAPEDRLLRAILGIQVSTSKETCLKLPIGGRGRVIDVRWVQKKGGTSYNPEIIRVYISQKREIKVGDKVAGRHGNKGIISKILPRQDMPYLQDGRPVDMVFNPLGVPSRMNVGQIFECSLGLAGSLLDRHYRIAPFDERYEQEASRKLVFSELYEASKQTANPWVFEPEYPGKSRIFDGRTGDPFEQPVIIGKPYILKLIHQVDDKIHGRSSGHYALVTQQPLRGRSKQGGQRVGEMEVWALEGFGVAHILQEMLTYKSDHIRARQEVLGTTIIGGTIPKPEDAPESFRLLVRELRSLALELNHFLVSEKNFQINRKEV.

The protein belongs to the RNA polymerase beta chain family. In terms of assembly, in plastids the minimal PEP RNA polymerase catalytic core is composed of four subunits: alpha, beta, beta', and beta''. When a (nuclear-encoded) sigma factor is associated with the core the holoenzyme is formed, which can initiate transcription.

The protein localises to the plastid. Its subcellular location is the chloroplast. It carries out the reaction RNA(n) + a ribonucleoside 5'-triphosphate = RNA(n+1) + diphosphate. Its function is as follows. DNA-dependent RNA polymerase catalyzes the transcription of DNA into RNA using the four ribonucleoside triphosphates as substrates. This chain is DNA-directed RNA polymerase subunit beta, found in Arabis hirsuta (Hairy rock-cress).